We begin with the raw amino-acid sequence, 100 residues long: Aspartyl/glutamyl-tRNA(Asn/Gln) amidotransferase subunit C (100 aa).

The protein belongs to the GatC family. As to quaternary structure, heterotrimer of A, B and C subunits.

The enzyme catalyses L-glutamyl-tRNA(Gln) + L-glutamine + ATP + H2O = L-glutaminyl-tRNA(Gln) + L-glutamate + ADP + phosphate + H(+). The catalysed reaction is L-aspartyl-tRNA(Asn) + L-glutamine + ATP + H2O = L-asparaginyl-tRNA(Asn) + L-glutamate + ADP + phosphate + 2 H(+). Allows the formation of correctly charged Asn-tRNA(Asn) or Gln-tRNA(Gln) through the transamidation of misacylated Asp-tRNA(Asn) or Glu-tRNA(Gln) in organisms which lack either or both of asparaginyl-tRNA or glutaminyl-tRNA synthetases. The reaction takes place in the presence of glutamine and ATP through an activated phospho-Asp-tRNA(Asn) or phospho-Glu-tRNA(Gln). This Rickettsia bellii (strain OSU 85-389) protein is Aspartyl/glutamyl-tRNA(Asn/Gln) amidotransferase subunit C.